The chain runs to 246 residues: Phycobilisome rod-core linker polypeptide CpcG2 (246 aa).

Residues 11 to 189 (SSQNQRVAGY…YWRDKLENSR (179 aa)) form the PBS-linker domain. The tract at residues 224–246 (DTTRRDRPTVPASINPTASFPLR) is disordered. Residues 235–246 (ASINPTASFPLR) are compositionally biased toward polar residues.

This sequence belongs to the phycobilisome linker protein family. In terms of assembly, the phycobilisome is a hemidiscoidal structure that is composed of two distinct substructures: a core complex and a number of rods radiating from the core.

It localises to the cellular thylakoid membrane. Rod-core linker protein required for attachment of phycocyanin to allophycocyanin in cores of phycobilisomes. In terms of biological role, linker polypeptides determine the state of aggregation and the location of the disk-shaped phycobiliprotein units within the phycobilisome and modulate their spectroscopic properties in order to mediate a directed and optimal energy transfer. The polypeptide is Phycobilisome rod-core linker polypeptide CpcG2 (cpcG2) (Thermosynechococcus vestitus (strain NIES-2133 / IAM M-273 / BP-1)).